The following is a 260-amino-acid chain: Late transcription factor 1 (260 aa).

The protein belongs to the chordopoxvirinae VLTF-1 family. As to quaternary structure, interacts with the late transcription factors VLTF-2 and VLTF-3. Interacts with the late transcription elongation factor VLTF-4. Interacts with itself.

Functionally, associates with RNA polymerase to initiate transcription from late gene promoters. The sequence is that of Late transcription factor 1 (OPG093) from Vaccinia virus (strain Ankara) (VACV).